Reading from the N-terminus, the 146-residue chain is Heat-stable 19 kDa antigen (146 aa).

Positions 1 to 20 are cleaved as a signal peptide; that stretch reads MKFSLLSAIAAAVFVPFTSA.

Belongs to the cerato-platanin family. Post-translationally, glycosylated.

The protein resides in the secreted. This is Heat-stable 19 kDa antigen (CSA) from Coccidioides immitis (strain RS) (Valley fever fungus).